A 500-amino-acid polypeptide reads, in one-letter code: Protein FAM83F (500 aa).

At alanine 2 the chain carries N-acetylalanine. The DUF1669 stretch occupies residues 2–300; sequence AESQLNCLDE…LYAISEEVDL (299 aa). Serine 4 bears the Phosphoserine mark. Disordered stretches follow at residues 82-109, 347-366, and 391-500; these read NARG…AYWP, QQRE…SGGE, and IPLG…CVIS. Positions 397–419 are enriched in basic and acidic residues; that stretch reads SQKDGRMVSHMHRDLKPKSREAP. Composition is skewed to low complexity over residues 425 to 442 and 458 to 468; these read GEAA…SSRL and SSVSTETSEVE. The span at 477-500 shows a compositional bias: polar residues; sequence ENSSADISGKTSPSSAKPSNCVIS. Serine 479 carries the post-translational modification Phosphoserine.

It belongs to the FAM83 family. In terms of assembly, directly interacts (via DUF1669) with CSNK1A1 and CSNK1A1L.

It localises to the cell membrane. The chain is Protein FAM83F (FAM83F) from Homo sapiens (Human).